The sequence spans 206 residues: dITP/XTP pyrophosphatase (206 aa).

Residue 7 to 12 (SNNAKK) participates in substrate binding. The Proton acceptor role is filled by Asp-72. Mg(2+) is bound at residue Asp-72. Substrate contacts are provided by residues Ser-73, 155-158 (FGYD), Lys-182, and 187-188 (HR).

The protein belongs to the HAM1 NTPase family. In terms of assembly, homodimer. The cofactor is Mg(2+).

The catalysed reaction is XTP + H2O = XMP + diphosphate + H(+). It carries out the reaction dITP + H2O = dIMP + diphosphate + H(+). The enzyme catalyses ITP + H2O = IMP + diphosphate + H(+). Pyrophosphatase that catalyzes the hydrolysis of nucleoside triphosphates to their monophosphate derivatives, with a high preference for the non-canonical purine nucleotides XTP (xanthosine triphosphate), dITP (deoxyinosine triphosphate) and ITP. Seems to function as a house-cleaning enzyme that removes non-canonical purine nucleotides from the nucleotide pool, thus preventing their incorporation into DNA/RNA and avoiding chromosomal lesions. This chain is dITP/XTP pyrophosphatase, found in Corynebacterium glutamicum (strain R).